The primary structure comprises 270 residues: uncharacterized protein (270 aa).

30–55 contacts NADP(+); it reads ATGSLGRVAARALADAGARLTLAGGN. Substrate is bound at residue S157. The Proton acceptor role is filled by Y171.

Belongs to the short-chain dehydrogenases/reductases (SDR) family.

This is an uncharacterized protein from Mycobacterium tuberculosis (strain CDC 1551 / Oshkosh).